A 172-amino-acid chain; its full sequence is MERAEKREFVTELNEVFKASGSVVVAHYAGSTVAQMNDFRSKMRAAGGTVKVAKNRLAKIALQGTEAEGMSNLFKGQTLIAYSNDPITAPKVVMDFAKTNDKIVVLGGAMGTTTLNAEAVKSLATLPSLDELRAKLLGMIQTPATRIVGVVAAPASQLARVFAAYAKKDEAA.

This sequence belongs to the universal ribosomal protein uL10 family. Part of the ribosomal stalk of the 50S ribosomal subunit. The N-terminus interacts with L11 and the large rRNA to form the base of the stalk. The C-terminus forms an elongated spine to which L12 dimers bind in a sequential fashion forming a multimeric L10(L12)X complex.

In terms of biological role, forms part of the ribosomal stalk, playing a central role in the interaction of the ribosome with GTP-bound translation factors. This is Large ribosomal subunit protein uL10 from Rhizobium etli (strain CIAT 652).